A 193-amino-acid polypeptide reads, in one-letter code: Large ribosomal subunit protein uL18 (193 aa).

It belongs to the universal ribosomal protein uL18 family. As to quaternary structure, part of the 50S ribosomal subunit. Contacts the 5S and 23S rRNAs.

Its function is as follows. This is one of the proteins that bind and probably mediate the attachment of the 5S RNA into the large ribosomal subunit, where it forms part of the central protuberance. In Methanococcus maripaludis (strain C5 / ATCC BAA-1333), this protein is Large ribosomal subunit protein uL18.